We begin with the raw amino-acid sequence, 597 residues long: MTINNRKSHLKDLDPGLMKDWEIAEKAEEFLKPSKMLAEELGLTEDEIIPHGKYVAKVDFAGVLTRLKDRPNGKYIDVTAITPTPLGEGKSTTTMGLVQGLGNLGKKVTGAIRQPSSGPTFNIKGSAAGGGRSQCLPLSPFTLGLTGDIDAVTNSHNLAMVALQARIQHEANNTDEFLSSRSLKRLDIDPARVELKWAIDFCAQSLREIIMGIGGKTDGYQMHSGFGISVSSEVMAILSVFTGLADLRERMSKIIVAYRQNGEPVTTADLEVDGAMTALLLRAVNPNLLQTIEGQPVFVHAGPFANIAIGQSSIVADRLALKLADYHVTESGFGADIGFEKFWNIKCRLSGLKPDCAVIVATVRALKMHGGGPKVTPGAPLDPAYTTPNAALVEKGCQNMLAHIQTVKTAGINPVVCINHFAADTAQEIDIIRRTAEQAGARVAVSYHWANGGEGAAELAEAVIDACNEPNDFHFLYPEDMPLRERIYTIARKVYGADGVSYTQTALEKLARLENTGNTQFMPSCMVKTHLSLSHDPALKGRPGGFTLPIRDILTYMGAGLVVPVAGDIKLMPGTSSDPNFRRIDIDTHTGKVKGLF.

Residue T84–S91 coordinates ATP.

The protein belongs to the formate--tetrahydrofolate ligase family.

It catalyses the reaction (6S)-5,6,7,8-tetrahydrofolate + formate + ATP = (6R)-10-formyltetrahydrofolate + ADP + phosphate. The protein operates within one-carbon metabolism; tetrahydrofolate interconversion. The sequence is that of Formate--tetrahydrofolate ligase from Dehalococcoides mccartyi (strain ATCC BAA-2266 / KCTC 15142 / 195) (Dehalococcoides ethenogenes (strain 195)).